Reading from the N-terminus, the 902-residue chain is HTH-type transcriptional regulator MalT (902 aa).

Residue 39-46 coordinates ATP; sequence SPAGYGKT. An HTH luxR-type domain is found at 832–897; it reads ELVRTSPLTQ…EAIVTAENLL (66 aa). Residues 856–875 constitute a DNA-binding region (H-T-H motif); it reads NEQIAQELDVAGTTIKTHIR.

The protein belongs to the MalT family. In terms of assembly, monomer in solution. Oligomerizes to an active state in the presence of the positive effectors ATP and maltotriose.

Its activity is regulated as follows. Activated by ATP and maltotriose, which are both required for DNA binding. In terms of biological role, positively regulates the transcription of the maltose regulon whose gene products are responsible for uptake and catabolism of malto-oligosaccharides. Specifically binds to the promoter region of its target genes, recognizing a short DNA motif called the MalT box. The polypeptide is HTH-type transcriptional regulator MalT (Vibrio parahaemolyticus serotype O3:K6 (strain RIMD 2210633)).